The primary structure comprises 123 residues: Urotensin-2 (123 aa).

Positions 1-20 are cleaved as a signal peptide; it reads MDRVPFCCLLFVGLLNPLLS. Residues 21 to 104 constitute a propeptide that is removed on maturation; sequence FPVTDTGEMS…TVLSRLLART (84 aa). The segment at 63-91 is disordered; that stretch reads EAEGSLGQADPSAETPTPRGSLRKALTGQ. The cysteines at positions 117 and 122 are disulfide-linked.

This sequence belongs to the urotensin-2 family. Brain specific.

It localises to the secreted. Highly potent vasoconstrictor. The sequence is that of Urotensin-2 (Uts2) from Rattus norvegicus (Rat).